The primary structure comprises 214 residues: Nicotinamidase (214 aa).

Catalysis depends on aspartate 18, which acts as the Proton acceptor. A divalent metal cation contacts are provided by aspartate 56, histidine 58, histidine 62, and histidine 91. The active site involves lysine 116. Cysteine 161 (nucleophile) is an active-site residue.

The protein belongs to the isochorismatase family. A divalent metal cation is required as a cofactor.

It carries out the reaction nicotinamide + H2O = nicotinate + NH4(+). It participates in cofactor biosynthesis; nicotinate biosynthesis; nicotinate from nicotinamide: step 1/1. Functionally, catalyzes the deamidation of nicotinamide (NAM) into nicotinate (Na). Functions in the deamidating salvage pathway for production of NAD from nicotinamide. This Acinetobacter baylyi (strain ATCC 33305 / BD413 / ADP1) protein is Nicotinamidase.